We begin with the raw amino-acid sequence, 154 residues long: Transcriptional repressor NrdR (154 aa).

A zinc finger lies at Cys-3–Cys-34. Residues Pro-49–Glu-139 form the ATP-cone domain.

The protein belongs to the NrdR family. Zn(2+) serves as cofactor.

Its function is as follows. Negatively regulates transcription of bacterial ribonucleotide reductase nrd genes and operons by binding to NrdR-boxes. This chain is Transcriptional repressor NrdR, found in Pseudomonas syringae pv. syringae (strain B728a).